A 90-amino-acid chain; its full sequence is Repetitive proline-rich cell wall protein 3 (90 aa).

A signal peptide spans 1 to 24 (MASFVSFLVLLLAALILMPQGLAT). Over residues 46–65 (KPPVYKPKPPVYKPKPPVYK) the composition is skewed to pro residues. The disordered stretch occupies residues 46–90 (KPPVYKPKPPVYKPKPPVYKPPYKKPPYKKPPYGKYPPVEDNTHA).

The protein belongs to the plant proline-rich protein superfamily. ENOD12 family.

Its subcellular location is the secreted. It localises to the cell wall. The polypeptide is Repetitive proline-rich cell wall protein 3 (PRP3) (Glycine max (Soybean)).